The following is a 553-amino-acid chain: CTP synthase (553 aa).

The amidoligase domain stretch occupies residues 1–277; it reads MPTEPETDYD…DQYVMEELDI (277 aa). Serine 26 is a binding site for CTP. Serine 26 serves as a coordination point for UTP. ATP is bound by residues 27–32 and aspartate 84; that span reads GLGKGI. Residues aspartate 84 and glutamate 152 each coordinate Mg(2+). Residues 159-161, 198-203, and lysine 234 contribute to the CTP site; these read DIE and KTKPTQ. UTP-binding positions include 198–203 and lysine 234; that span reads KTKPTQ. Valine 252 provides a ligand contact to ATP. The region spanning 307-544 is the Glutamine amidotransferase type-1 domain; that stretch reads LVGKYDLEDA…LEAVLGDDPH (238 aa). Glycine 364 contributes to the L-glutamine binding site. Cysteine 391 serves as the catalytic Nucleophile; for glutamine hydrolysis. Residues 392–395, glutamate 415, and arginine 472 each bind L-glutamine; that span reads LGFQ. Catalysis depends on residues histidine 517 and glutamate 519.

This sequence belongs to the CTP synthase family. In terms of assembly, homotetramer.

It is found in the cytoplasm. It carries out the reaction UTP + L-glutamine + ATP + H2O = CTP + L-glutamate + ADP + phosphate + 2 H(+). The enzyme catalyses L-glutamine + H2O = L-glutamate + NH4(+). It catalyses the reaction UTP + NH4(+) + ATP = CTP + ADP + phosphate + 2 H(+). The protein operates within pyrimidine metabolism; CTP biosynthesis via de novo pathway; CTP from UDP: step 2/2. With respect to regulation, allosterically activated by GTP, when glutamine is the substrate; GTP has no effect on the reaction when ammonia is the substrate. The allosteric effector GTP functions by stabilizing the protein conformation that binds the tetrahedral intermediate(s) formed during glutamine hydrolysis. Inhibited by the product CTP, via allosteric rather than competitive inhibition. Inhibited by 6-diazo-5-oxo-l-norleucine (DON). Functionally, catalyzes the ATP-dependent amination of UTP to CTP with either L-glutamine or ammonia as the source of nitrogen. Regulates intracellular CTP levels through interactions with the four ribonucleotide triphosphates. This Haloarcula hispanica (strain ATCC 33960 / DSM 4426 / JCM 8911 / NBRC 102182 / NCIMB 2187 / VKM B-1755) protein is CTP synthase.